Consider the following 186-residue polypeptide: Hydra actinoporin-like toxin 6 (186 aa).

The signal sequence occupies residues 1 to 21 (MLVYVCLVVILIQLPFGAAGG). The short motif at 158–160 (RAG) is the Cell attachment site element.

Belongs to the actinoporin family. HALT subfamily. In terms of assembly, octamer or nonamer in membranes. Monomer in the soluble state. In vitro, interacts with folate receptor alpha (of target organism). Expressed female germline during oogenesis.

Its subcellular location is the nematocyst. It localises to the secreted. The protein localises to the target cell membrane. Pore-forming protein that forms hydrophilic pores and causes cytolysis. Compared to equinatoxin-2 (AC P61914), it reveals lower cytolysis activity (5-12-fold difference, tested on erythrocytes), a larger pore size (probably 2-3 nm) and different affinity to membrane lipids (100-fold lower affinity to sphingomyelin). Binds to sulfatides. Shows cytolytic activity on HeLa cells, with a different potency than its paralogs (from most potent to less potent: HALT-4&gt;HALT-6~HALT-1&gt;HALT-3&gt;HALT-7&gt;HALT-2). Pore formation is a multi-step process that involves specific recognition of membrane lipid by a protein aromatic residues rich region, firm binding to the membrane (mainly driven by hydrophobic interactions) accompanied by the transfer of the N-terminal region to the lipid-water interface and finally pore formation after oligomerization of monomers. In vitro, binds to the folate receptor alpha (FOLR1), a GPI-anchored membrane protein that plays a major role in the uptake of folate/folic acid into cells via endocytosis, suggesting a possible involvement of this receptor in the mechanism of HALT-1-induced cell lysis. In vivo, does not cause visible paralysis in larvae of the blowfly Sarcophaga faculata, the most common arthropod prey of Hydra. The chain is Hydra actinoporin-like toxin 6 from Hydra vulgaris (Hydra).